The primary structure comprises 420 residues: L-glutamine:2-deoxy-scyllo-inosose aminotransferase (420 aa).

K201 is subject to N6-(pyridoxal phosphate)lysine.

Belongs to the DegT/DnrJ/EryC1 family. L-glutamine:2-deoxy-scyllo-inosose/scyllo-inosose aminotransferase subfamily. Pyridoxal 5'-phosphate is required as a cofactor.

The catalysed reaction is 2-deoxy-L-scyllo-inosose + L-glutamine = 2-deoxy-scyllo-inosamine + 2-oxoglutaramate. The enzyme catalyses 3-amino-2,3-dideoxy-scyllo-inosose + L-glutamine = 2-deoxystreptamine + 2-oxoglutaramate. Its pathway is metabolic intermediate biosynthesis; 2-deoxystreptamine biosynthesis; 2-deoxystreptamine from D-glucose 6-phosphate: step 2/4. The protein operates within antibiotic biosynthesis; gentamicin biosynthesis. Catalyzes the PLP-dependent transamination of 2-deoxy-scyllo-inosose (2-DOI) to form 2-deoxy-scyllo-inosamine (2-DOIA) using L-glutamine as the amino donor. Also catalyzes the transamination of 3-amino-2,3-dideoxy-scyllo-inosose (keto-2-DOIA) into 2-deoxystreptamine (2-DOS). The polypeptide is L-glutamine:2-deoxy-scyllo-inosose aminotransferase (gntA) (Micromonospora echinospora (Micromonospora purpurea)).